Reading from the N-terminus, the 342-residue chain is S-adenosyl-L-methionine-dependent tRNA 4-demethylwyosine synthase (342 aa).

3 residues coordinate [2Fe-2S] cluster: Cys45, Cys58, and Cys71. Residues 64–312 enclose the Radical SAM core domain; that stretch reads YGIHSHRCLQ…VKHLPGYHIE (249 aa). Positions 81, 85, and 88 each coordinate [4Fe-4S] cluster.

This sequence belongs to the TYW1 family. Monomer. [2Fe-2S] cluster serves as cofactor. It depends on [4Fe-4S] cluster as a cofactor.

The protein resides in the cytoplasm. It carries out the reaction N(1)-methylguanosine(37) in tRNA(Phe) + pyruvate + S-adenosyl-L-methionine = 4-demethylwyosine(37) in tRNA(Phe) + 5'-deoxyadenosine + L-methionine + CO2 + H2O. Its function is as follows. Component of the wyosine derivatives biosynthesis pathway that catalyzes the condensation of N-methylguanine with 2 carbon atoms from pyruvate to form the tricyclic 4-demethylwyosine (imG-14) on guanosine-37 of tRNA(Phe). The protein is S-adenosyl-L-methionine-dependent tRNA 4-demethylwyosine synthase of Pyrococcus horikoshii (strain ATCC 700860 / DSM 12428 / JCM 9974 / NBRC 100139 / OT-3).